The primary structure comprises 457 residues: Aromatic amino acid transport protein AroP (457 aa).

Residues 1–19 (MMEGQQHGEQLKRGLKNRH) are Cytoplasmic-facing. Residues 20–40 (IQLIALGGAIGTGLFLGSASV) form a helical membrane-spanning segment. The Periplasmic portion of the chain corresponds to 41-42 (IQ). The helical transmembrane segment at 43 to 63 (SAGPGIILGYAIAGFIAFLIM) threads the bilayer. Over 64–86 (RQLGEMVVEEPVAGSFSHFAYKY) the chain is Cytoplasmic. The chain crosses the membrane as a helical span at residues 87–107 (WGSFAGFASGWNYWVLYVLVA). Topologically, residues 108-117 (MAELTAVGKY) are periplasmic. The chain crosses the membrane as a helical span at residues 118 to 138 (IQFWYPEIPTWVSAAVFFVVI). Topologically, residues 139–155 (NAINLTNVKVFGEMEFW) are cytoplasmic. A helical membrane pass occupies residues 156-176 (FAIIKVIAVVAMIIFGGWLLF). At 177–201 (SGNGGPQASVSNLWDQGGFLPHGFT) the chain is on the periplasmic side. Residues 202 to 222 (GLVMMMAIIMFSFGGLELVGI) traverse the membrane as a helical segment. Over 223–240 (TAAEADNPEQSIPKATNQ) the chain is Cytoplasmic. Residues 241–261 (VIYRILIFYIGSLAVLLSLMP) traverse the membrane as a helical segment. Residues 262–271 (WTRVTADTSP) lie on the Periplasmic side of the membrane. Residues 272–292 (FVLIFHELGDTFVANALNIVV) form a helical membrane-spanning segment. Residues 293 to 333 (LTAALSVYNSCVYCNSRMLFGLAQQGNAPKALASVDKRGVP) are Cytoplasmic-facing. The chain crosses the membrane as a helical span at residues 334–354 (VNTILVSALVTALCVLINYLA). The Periplasmic segment spans residues 355-358 (PESA). The chain crosses the membrane as a helical span at residues 359 to 379 (FGLLMALVVSALVINWAMISL). The Cytoplasmic segment spans residues 380–399 (AHMKFRRAKQEQGVVTRFPA). The helical transmembrane segment at 400-420 (LLYPLGNWICLLFMAAVLVIM) threads the bilayer. At 421–425 (LMTPG) the chain is on the periplasmic side. Residues 426-446 (MAISVYLIPVWLIVLGIGYLF) form a helical membrane-spanning segment. At 447-457 (KEKTAKAVKAH) the chain is on the cytoplasmic side.

Belongs to the amino acid-polyamine-organocation (APC) superfamily. Amino acid transporter (AAT) (TC 2.A.3.1) family.

It is found in the cell inner membrane. It catalyses the reaction L-phenylalanine(in) + H(+)(in) = L-phenylalanine(out) + H(+)(out). It carries out the reaction L-tryptophan(in) + H(+)(in) = L-tryptophan(out) + H(+)(out). The enzyme catalyses L-tyrosine(in) + H(+)(in) = L-tyrosine(out) + H(+)(out). Functionally, permease that is involved in the active transport across the cytoplasmic membrane of all three aromatic amino acids, phenylalanine, tyrosine and tryptophan. The protein is Aromatic amino acid transport protein AroP (aroP) of Shigella flexneri.